The chain runs to 537 residues: Putative cysteine ligase BshC (537 aa).

Residues 383–451 (MERTQKLLKQ…EVKENQDNFN (69 aa)) adopt a coiled-coil conformation.

It belongs to the BshC family.

In terms of biological role, involved in bacillithiol (BSH) biosynthesis. May catalyze the last step of the pathway, the addition of cysteine to glucosamine malate (GlcN-Mal) to generate BSH. This is Putative cysteine ligase BshC from Staphylococcus haemolyticus (strain JCSC1435).